The chain runs to 127 residues: Flagellar hook-basal body complex protein FliE (127 aa).

This sequence belongs to the FliE family.

The protein localises to the bacterial flagellum basal body. The chain is Flagellar hook-basal body complex protein FliE from Leptospira interrogans serogroup Icterohaemorrhagiae serovar copenhageni (strain Fiocruz L1-130).